The following is a 299-amino-acid chain: Protoheme IX farnesyltransferase (299 aa).

Transmembrane regions (helical) follow at residues 27-47, 53-73, 97-117, 121-141, 149-169, 175-195, 222-242, 244-264, and 273-293; these read VVALMLLTSVVGMSLAPHEHF, LIALVGIALMAGSAAAFNHLI, FNVLLFALLIGSLGFLSLMLW, LTAYLTFASLLGYAVVYTLYL, IVIAGIAGAMPPLLGWTSITG, AWLLVMIIFIWTPPHFWALAI, ILLYAILLALVCMLPVLVGMA, YLYLFSALVLNVCFVRYAIKL, and AIEMFRFSIYFLLLLFCALLL.

Belongs to the UbiA prenyltransferase family. Protoheme IX farnesyltransferase subfamily.

It localises to the cell inner membrane. It carries out the reaction heme b + (2E,6E)-farnesyl diphosphate + H2O = Fe(II)-heme o + diphosphate. It participates in porphyrin-containing compound metabolism; heme O biosynthesis; heme O from protoheme: step 1/1. In terms of biological role, converts heme B (protoheme IX) to heme O by substitution of the vinyl group on carbon 2 of heme B porphyrin ring with a hydroxyethyl farnesyl side group. This Vibrio vulnificus (strain YJ016) protein is Protoheme IX farnesyltransferase.